Here is a 223-residue protein sequence, read N- to C-terminus: Small ribosomal subunit protein uS3 (223 aa).

The 70-residue stretch at 39–108 (IRNFVKKNSY…NILINIVEVK (70 aa)) folds into the KH type-2 domain.

The protein belongs to the universal ribosomal protein uS3 family. In terms of assembly, part of the 30S ribosomal subunit. Forms a tight complex with proteins S10 and S14.

Functionally, binds the lower part of the 30S subunit head. Binds mRNA in the 70S ribosome, positioning it for translation. In Clostridium botulinum (strain Hall / ATCC 3502 / NCTC 13319 / Type A), this protein is Small ribosomal subunit protein uS3.